The chain runs to 295 residues: Phosphate transport system permease protein PstA (295 aa).

A run of 6 helical transmembrane segments spans residues 29-49, 88-108, 126-146, 149-169, 198-218, and 266-286; these read IALV…IWIL, LLIL…GIYL, DILL…IVVA, EHFS…PIVI, ISAI…LLAI, and NLAW…NILA. Residues 83 to 286 enclose the ABC transmembrane type-1 domain; that stretch reads IAGSGLLILW…LCVLLLNILA (204 aa).

Belongs to the binding-protein-dependent transport system permease family. CysTW subfamily.

Its subcellular location is the cell inner membrane. In terms of biological role, part of a binding-protein-dependent transport system for phosphate; probably responsible for the translocation of the substrate across the membrane. The chain is Phosphate transport system permease protein PstA (pstA) from Yersinia pestis.